A 424-amino-acid chain; its full sequence is Histidine--tRNA ligase (424 aa).

It belongs to the class-II aminoacyl-tRNA synthetase family. As to quaternary structure, homodimer.

It is found in the cytoplasm. It carries out the reaction tRNA(His) + L-histidine + ATP = L-histidyl-tRNA(His) + AMP + diphosphate + H(+). In Shigella dysenteriae serotype 1 (strain Sd197), this protein is Histidine--tRNA ligase.